Here is a 205-residue protein sequence, read N- to C-terminus: Protein phosphatase inhibitor 2 (205 aa).

The segment at 1-44 (MAASTASHRPIKGILKNKTSTTSSVVASAEQPRRTVEEELSKKS) is disordered. Ala-2 is subject to N-acetylalanine. The required for binding PPP1CC stretch occupies residues 12-17 (KGILKN). Residues 19–29 (TSTTSSVVASA) show a composition bias toward low complexity. Positions 31–44 (QPRRTVEEELSKKS) are enriched in basic and acidic residues. Residues 43–55 (KSQKWDEMNILAT) are required for binding PPP1CC. Ser-44 is subject to Phosphoserine; by ATM. Thr-73 carries the phosphothreonine; by GSK3 modification. 2 positions are modified to phosphoserine: Ser-87 and Ser-89. Residues Thr-96 and Thr-116 each carry the phosphothreonine modification. Residues 104 to 142 (LAAAEGSEPKFRTREQESSGEEDNDLSPEEREKKRQFEM) form a disordered region. Basic and acidic residues predominate over residues 110–120 (SEPKFRTREQE). 3 positions are modified to phosphoserine: Ser-121, Ser-122, and Ser-130. The span at 121–130 (SSGEEDNDLS) shows a compositional bias: acidic residues. Basic and acidic residues predominate over residues 131-142 (PEEREKKRQFEM). Residues 147-150 (HYNE) form a required for binding PPP1CC catalytic center, displacing metal ions and inhibition of PPP1CC catalytic activity region. The segment at 163 to 205 (KDLHDDDEDEEMSETADADSMNIEESNQGSTAGDHLQHKSQSS) is disordered. Residues 167–179 (DDDEDEEMSETAD) show a composition bias toward acidic residues.

The protein belongs to the protein phosphatase inhibitor 2 family. As to quaternary structure, heterodimer with PP1. In terms of processing, phosphorylation on Ser-44 by ATM activates PP1 by dissociating the PP1-PPP1R2 complex. Phosphorylation on Thr-73 by GSK3 activates PP1 by dissociating the PP1-PPP1R2 complex. In terms of tissue distribution, central nervous system.

In terms of biological role, inhibitor of protein-phosphatase 1. In Rattus norvegicus (Rat), this protein is Protein phosphatase inhibitor 2 (Ppp1r2).